A 267-amino-acid polypeptide reads, in one-letter code: Probable 3-methyl-2-oxobutanoate hydroxymethyltransferase (267 aa).

This sequence belongs to the PanB family.

It carries out the reaction 3-methyl-2-oxobutanoate + (6R)-5,10-methylene-5,6,7,8-tetrahydrofolate + H2O = 2-dehydropantoate + (6S)-5,6,7,8-tetrahydrofolate. It participates in cofactor biosynthesis; (R)-pantothenate biosynthesis; (R)-pantoate from 3-methyl-2-oxobutanoate: step 1/2. This is Probable 3-methyl-2-oxobutanoate hydroxymethyltransferase from Schizosaccharomyces pombe (strain 972 / ATCC 24843) (Fission yeast).